The primary structure comprises 545 residues: Cytochrome P450 monooxygenase 212 (545 aa).

The first 14 residues, 1-14, serve as a signal peptide directing secretion; that stretch reads MAAYAWLYCALALG. Cys-486 provides a ligand contact to heme.

This sequence belongs to the cytochrome P450 family. Heme serves as cofactor.

It functions in the pathway secondary metabolite biosynthesis. Its function is as follows. Cytochrome P450 monooxygenase that is able to use anthracene and pyrene as substrates for oxidation. This is Cytochrome P450 monooxygenase 212 from Postia placenta (strain ATCC 44394 / Madison 698-R) (Brown rot fungus).